The primary structure comprises 406 residues: MSLIRVNGEAFKLSLESLEEDPFETKETLETLVKQTSVVLLAAGESRRFSQIIKKQWLRSNHTPLWLSVYESFKEALDFKEILLIVSELDYIYIQRHYPEIKLVKGGASRQESVRNALKIIDSTYTLTSDVARGLANMEALKSLFLTLQQTSHYCIAPYLPCYDTAIYYNEALDREAIKLIQTPQLSHTKALQSALNQGDFKDESSAILQAFPNRVSYIEGSKNLHKLTTSGDLKHFALFFNPAKDTFIGMGFDTHAFIKDKPMVLGGVVLDCEFGLKAHSDGDALLHAVIDAILGAIKGGDIGEWFPDNDPKYKNASSKELLKIVLDFSQSIGFELFEMGATIFSEIPKITPYKPAILENLSQLLGLEKSQISLKATTMEKMGFIGKQEGLLVQAHVSMRYKQKL.

Residues 1–247 (MSLIRVNGEA…ALFFNPAKDT (247 aa)) are 2-C-methyl-D-erythritol 4-phosphate cytidylyltransferase. The 2-C-methyl-D-erythritol 2,4-cyclodiphosphate synthase stretch occupies residues 248–406 (FIGMGFDTHA…HVSMRYKQKL (159 aa)). The a divalent metal cation site is built by D254 and H256. 4-CDP-2-C-methyl-D-erythritol 2-phosphate is bound by residues 254–256 (DTH) and 280–281 (HS). H288 contacts a divalent metal cation. 4-CDP-2-C-methyl-D-erythritol 2-phosphate-binding positions include 302 to 304 (DIG), 307 to 311 (FPDND), 378 to 381 (TTME), F385, and K388.

In the N-terminal section; belongs to the IspD/TarI cytidylyltransferase family. IspD subfamily. This sequence in the C-terminal section; belongs to the IspF family. Requires a divalent metal cation as cofactor.

The catalysed reaction is 2-C-methyl-D-erythritol 4-phosphate + CTP + H(+) = 4-CDP-2-C-methyl-D-erythritol + diphosphate. It carries out the reaction 4-CDP-2-C-methyl-D-erythritol 2-phosphate = 2-C-methyl-D-erythritol 2,4-cyclic diphosphate + CMP. It participates in isoprenoid biosynthesis; isopentenyl diphosphate biosynthesis via DXP pathway; isopentenyl diphosphate from 1-deoxy-D-xylulose 5-phosphate: step 2/6. Its pathway is isoprenoid biosynthesis; isopentenyl diphosphate biosynthesis via DXP pathway; isopentenyl diphosphate from 1-deoxy-D-xylulose 5-phosphate: step 4/6. Functionally, bifunctional enzyme that catalyzes the formation of 4-diphosphocytidyl-2-C-methyl-D-erythritol from CTP and 2-C-methyl-D-erythritol 4-phosphate (MEP) (IspD), and catalyzes the conversion of 4-diphosphocytidyl-2-C-methyl-D-erythritol 2-phosphate (CDP-ME2P) to 2-C-methyl-D-erythritol 2,4-cyclodiphosphate (ME-CPP) with a corresponding release of cytidine 5-monophosphate (CMP) (IspF). This chain is Bifunctional enzyme IspD/IspF, found in Helicobacter pylori (strain P12).